The sequence spans 179 residues: MIRIFLTGYMGAGKTTLGKALARELHIPFIDLDWYIEERFHKTVGELFSERGEASFRELEKNMLHEVGEFEDVVISTGGGAPCFFDNMEYMNRVGTTVFLDVDPKVLFSRLRVAKQQRPILQGKKDDELLDFIVQALEKRAPFYRQANYIYCADKLEDRSQIETSVQQLRKLLNLHIAS.

ATP is bound at residue Gly-11 to Thr-16. A Mg(2+)-binding site is contributed by Thr-15. Positions 33, 57, and 79 each coordinate substrate. Residue Arg-118 coordinates ATP. A substrate-binding site is contributed by Arg-140.

It belongs to the shikimate kinase family. As to quaternary structure, monomer. It depends on Mg(2+) as a cofactor.

The protein resides in the cytoplasm. The enzyme catalyses shikimate + ATP = 3-phosphoshikimate + ADP + H(+). It functions in the pathway metabolic intermediate biosynthesis; chorismate biosynthesis; chorismate from D-erythrose 4-phosphate and phosphoenolpyruvate: step 5/7. Functionally, catalyzes the specific phosphorylation of the 3-hydroxyl group of shikimic acid using ATP as a cosubstrate. The protein is Shikimate kinase of Bacteroides fragilis (strain ATCC 25285 / DSM 2151 / CCUG 4856 / JCM 11019 / LMG 10263 / NCTC 9343 / Onslow / VPI 2553 / EN-2).